A 985-amino-acid chain; its full sequence is Invasin (985 aa).

Residues 494 to 594 are D1; it reads SVTVQQPQLT…RQSVDTHFVK (101 aa). Residues 494–985 lie on the Extracellular side of the membrane; it reads SVTVQQPQLT…LAFPLCALAI (492 aa). Big-1 domains follow at residues 503-594 and 601-691; these read TLTA…HFVK and KSTL…VNFT. The tract at residues 595–694 is D2; sequence GTIAADKSTL…SVTVNFTADP (100 aa). Residues 695–794 form a D3 region; sequence IPDAGRSSFT…LQKKISLFPV (100 aa). A D4 region spans residues 795-886; the sequence is PTLTGILVNG…YSVSYRFYPN (92 aa). The segment at 795–985 is integrin-binding; it reads PTLTGILVNG…LAFPLCALAI (191 aa). The segment at 887-985 is D5; the sequence is RWIYDGGTSL…LAFPLCALAI (99 aa). An intrachain disulfide couples Cys906 to Cys981.

It belongs to the intimin/invasin family.

Its subcellular location is the cell surface. In terms of biological role, invasin is a protein that allows enteric bacteria to penetrate cultured mammalian cells. The entry of invasin in the cell is mediated by binding several beta-1 chain integrins. The polypeptide is Invasin (Yersinia pseudotuberculosis serotype I (strain IP32953)).